Consider the following 484-residue polypeptide: Secreted RxLR effector protein 104 (484 aa).

An N-terminal signal peptide occupies residues 1 to 24 (MRSAYPVLTALLVVASSQIAAGSG). A RxLR-dEER motif is present at residues 48 to 65 (RFLRGSRDVHNNVANEER). The N-linked (GlcNAc...) asparagine glycan is linked to Asn175. Positions 324-463 (ENPKGQSPYP…SSSVLTPEDV (140 aa)) are disordered. The segment covering 327-346 (KGQSPYPSTPLTAASTSKGG) has biased composition (polar residues). A compositionally biased stretch (low complexity) spans 402–413 (SSSSGPSRAFAP). Residues 418–428 (DQTFITENSRL) are compositionally biased toward polar residues.

The protein belongs to the RxLR effector family.

The protein resides in the secreted. It localises to the host nucleus. In terms of biological role, secreted effector that completely suppresses the host cell death induced by cell death-inducing proteins. This chain is Secreted RxLR effector protein 104, found in Plasmopara viticola (Downy mildew of grapevine).